The sequence spans 226 residues: RLA class II histocompatibility antigen, DP alpha-1 chain (226 aa).

Topologically, residues 1-189 (EHVSVFVIFA…PIQMPETTET (189 aa)) are extracellular. N-linked (GlcNAc...) asparagine glycosylation is found at Asn75 and Asn115. Positions 84-176 (PEVIVFPKEP…LDAPLLTHWE (93 aa)) constitute an Ig-like C1-type domain. An intrachain disulfide couples Cys104 to Cys160. A helical membrane pass occupies residues 190–210 (VVCALGLVVGLAGVVVGIVLI). The Cytoplasmic portion of the chain corresponds to 211–226 (TKALRSSPDPRARRPL).

Belongs to the MHC class II family.

The protein localises to the membrane. This Oryctolagus cuniculus (Rabbit) protein is RLA class II histocompatibility antigen, DP alpha-1 chain.